A 202-amino-acid polypeptide reads, in one-letter code: Histone chaperone ASF1B (202 aa).

The segment at 1-156 (MAKVSVLNVA…TRFHINWDNN (156 aa)) is interaction with histone H3 and CHAF1B. Ser-198 carries the post-translational modification Phosphoserine; by TLK2.

It belongs to the ASF1 family. Interacts with histone H3 (via C-terminus), including histone H3.1, H3.2 and H3.3, and histone H4; the interaction with H3 is direct. Interacts with the CHAF1A, CHAF1B and RBBP4 subunits of the CAF-1 complex. Interacts with HAT1, NASP and TAF1. Found in a soluble complex with NASP and histones H3 and H4; the interaction with NASP is probably indirect and mediated by H3-H4. Interacts with CDAN1. Found in a cytosolic complex with CDAN1, ASF1A, IPO4 and histones H3.1 and H4. Interacts with CREBBP. Post-translationally, phosphorylated by TLK1 and TLK2.

It localises to the nucleus. Its subcellular location is the cytoplasm. The protein resides in the cytosol. Histone chaperone that facilitates histone deposition and histone exchange and removal during nucleosome assembly and disassembly. Cooperates with chromatin assembly factor 1 (CAF-1) to promote replication-dependent chromatin assembly. Also involved in the nuclear import of the histone H3-H4 dimer together with importin-4 (IPO4): specifically recognizes and binds newly synthesized histones with the monomethylation of H3 'Lys-9' (H3K9me1) and diacetylation at 'Lys-5' and 'Lys-12' of H4 (H4K5ac and H4K12ac) marks in the cytosol. Does not participate in replication-independent nucleosome deposition which is mediated by ASF1A and HIRA. Required for gonad development. The protein is Histone chaperone ASF1B (ASF1B) of Bos taurus (Bovine).